Reading from the N-terminus, the 356-residue chain is Replication factor C subunit 3 (356 aa).

Lys20 carries the N6-acetyllysine modification. Ser125 carries the post-translational modification Phosphoserine.

It belongs to the activator 1 small subunits family. In terms of assembly, subunit of the RFC complex, an heteropentameric complex consisting of a large subunit RFC1 and four small subunits RFC2, RFC3, RFC4 and RFC5; the RFC complex interacts with PCNA. Forms an heterotetrameric complex with RFC2, RFC4 and RFC5; this complex has ATPase activity but is not stimulated by PCNA. The heterotetramer of subunits RFC2, RFC3, RFC4 and RFC5 interacts with RAD17. Interacts with CNTD1; this interaction facilitates crossover formation.

Its subcellular location is the nucleus. Functionally, subunit of the replication factor C (RFC) complex which acts during elongation of primed DNA templates by DNA polymerases delta and epsilon, and is necessary for ATP-dependent loading of proliferating cell nuclear antigen (PCNA) onto primed DNA. The protein is Replication factor C subunit 3 (RFC3) of Homo sapiens (Human).